Reading from the N-terminus, the 228-residue chain is 2,3-bisphosphoglycerate-dependent phosphoglycerate mutase (228 aa).

Substrate is bound by residues 8–15, 21–22, Arg60, 87–90, Lys98, 114–115, and 183–184; these read RHGQSEWN, TG, ERHY, RR, and GN. The active-site Tele-phosphohistidine intermediate is the His9. The active-site Proton donor/acceptor is the Glu87.

It belongs to the phosphoglycerate mutase family. BPG-dependent PGAM subfamily.

It carries out the reaction (2R)-2-phosphoglycerate = (2R)-3-phosphoglycerate. The protein operates within carbohydrate degradation; glycolysis; pyruvate from D-glyceraldehyde 3-phosphate: step 3/5. Catalyzes the interconversion of 2-phosphoglycerate and 3-phosphoglycerate. The sequence is that of 2,3-bisphosphoglycerate-dependent phosphoglycerate mutase from Staphylococcus haemolyticus (strain JCSC1435).